The following is a 207-amino-acid chain: MFFVTPAYAEEAPAAATGTDAHAAPAAGEVHTETGVAEGEHARGPFPPFDSTTYASQLLWLVITFSVFYLLMQKVIAPRIGAILDQRHTRLSQDLEEAGRLKAEADAAVQTYEGELAAARAKSNAIGAAARDAAKLKAEEDRRAVEASLSEKIKAAEVRIADIKAKAFADVGTIAEETAAAVVEQLIGGTAAQADVAAAVAAAKKEA.

The chain crosses the membrane as a helical span at residues 53 to 72 (TYASQLLWLVITFSVFYLLM).

It belongs to the ATPase B chain family. In terms of assembly, F-type ATPases have 2 components, F(1) - the catalytic core - and F(0) - the membrane proton channel. F(1) has five subunits: alpha(3), beta(3), gamma(1), delta(1), epsilon(1). F(0) has three main subunits: a(1), b(2) and c(10-14). The alpha and beta chains form an alternating ring which encloses part of the gamma chain. F(1) is attached to F(0) by a central stalk formed by the gamma and epsilon chains, while a peripheral stalk is formed by the delta and b chains.

The protein resides in the cell inner membrane. Its function is as follows. F(1)F(0) ATP synthase produces ATP from ADP in the presence of a proton or sodium gradient. F-type ATPases consist of two structural domains, F(1) containing the extramembraneous catalytic core and F(0) containing the membrane proton channel, linked together by a central stalk and a peripheral stalk. During catalysis, ATP synthesis in the catalytic domain of F(1) is coupled via a rotary mechanism of the central stalk subunits to proton translocation. In terms of biological role, component of the F(0) channel, it forms part of the peripheral stalk, linking F(1) to F(0). The b'-subunit is a diverged and duplicated form of b found in plants and photosynthetic bacteria. The polypeptide is ATP synthase subunit b 2 (atpF2) (Rhizobium leguminosarum bv. trifolii (strain WSM2304)).